The sequence spans 100 residues: Urease subunit gamma (100 aa).

It belongs to the urease gamma subunit family. Heterotrimer of UreA (gamma), UreB (beta) and UreC (alpha) subunits. Three heterotrimers associate to form the active enzyme.

It is found in the cytoplasm. It catalyses the reaction urea + 2 H2O + H(+) = hydrogencarbonate + 2 NH4(+). Its pathway is nitrogen metabolism; urea degradation; CO(2) and NH(3) from urea (urease route): step 1/1. This chain is Urease subunit gamma, found in Pseudomonas putida (strain ATCC 700007 / DSM 6899 / JCM 31910 / BCRC 17059 / LMG 24140 / F1).